The sequence spans 399 residues: Beta-1,6-galactosyltransferase GALT31A (399 aa).

At 1-12 the chain is on the cytoplasmic side; the sequence is MGMGRYQKSATS. The chain crosses the membrane as a helical; Signal-anchor for type II membrane protein span at residues 13 to 35; the sequence is GVSARWVFVLCISSFLLGVLVVN. Topologically, residues 36–399 are lumenal; sequence RLLASFETVD…GDGAIWHSSF (364 aa).

It belongs to the glycosyltransferase 31 family. In terms of assembly, interacts with GALT29A. It depends on Mn(2+) as a cofactor.

It localises to the golgi apparatus membrane. Its pathway is protein modification; protein glycosylation. Its function is as follows. Beta-galactosyltransferase involved in elongation of beta-1,6-linked galactan side chains on arabinogalactan proteins. Required for the progression of embryogenesis beyond the globular stage. Beta-galactosyltransferase involved in the biosynthesis of type II arabinogalactan. Transfers galactose from UDP-galactose to a mixture of various oligosaccharides derived from arabinogalactan proteins. Forms a complex with GALT29A that can work cooperatively to enhance the activities of adding galactose residues at O6 positions to beta-1,6-linked galactan and beta-1,3-linked galactan. The chain is Beta-1,6-galactosyltransferase GALT31A from Arabidopsis thaliana (Mouse-ear cress).